The primary structure comprises 54 residues: Large ribosomal subunit protein bL33 (54 aa).

The protein belongs to the bacterial ribosomal protein bL33 family.

This is Large ribosomal subunit protein bL33 from Xylella fastidiosa (strain M23).